A 443-amino-acid chain; its full sequence is Two-pore potassium channel 2 (443 aa).

The Cytoplasmic portion of the chain corresponds to M1–T144. Positions S67–P109 are disordered. A compositionally biased stretch (low complexity) spans A72 to T98. Residues I145–W165 form a helical membrane-spanning segment. An intramembrane region (pore-forming) is located at residues D181–P200. Residues F208–V228 form a helical membrane-spanning segment. The Cytoplasmic segment spans residues T229–V274. The chain crosses the membrane as a helical span at residues G275–V295. An intramembrane region (pore-forming) is located at residues D302 to F321. Residues L328 to L348 traverse the membrane as a helical segment. At A349–I443 the chain is on the cytoplasmic side. EF-hand domains lie at L365–K400 and K404–T439. Residues D378, D380, N382, C384, E389, D417, S421, R423, and D428 each coordinate Ca(2+).

The protein belongs to the two pore domain potassium channel (TC 1.A.1.7) family. As to quaternary structure, homodimer. In terms of tissue distribution, expressed in roots, stems, leaves and flowers.

The protein localises to the vacuole membrane. Functionally, probable voltage-independent potassium-selective tonoplast ion channel. This Arabidopsis thaliana (Mouse-ear cress) protein is Two-pore potassium channel 2 (TPK2).